The sequence spans 337 residues: MIEADRLIQPQVLAQDEHIDRAMRPKLLDDYTGQDDTRAQLKIFIQAAINRKEALDHMLIFGPPGLGKTTLAMIVANEMGVNIKSTSGPVLEKAGDLAALLTNLDEGDVLFIDEIHRLSPVVEEILYPAMEDYQLDIMIGEGPAARSIKLDLPPFTLIGATTRAGALTSPLRARFGIPLRLEFYNVKDLCTIVTRSAKVMELAIDAGGAHEIAKRSRGTPRIANRLLRRVRDYAEVKFAGEVTEDVAQQALDMLDVDQEGFDYLDRKLLLSIIDKFMGGPVGLDNLAAAIGEDRETIEDVLEPFLIQQGFIQRTPRGRIVTPRAYQHFNIITPDVPK.

Positions 4 to 184 are large ATPase domain (RuvB-L); it reads ADRLIQPQVL…FGIPLRLEFY (181 aa). Residues Arg24, Gly65, Lys68, Thr69, Thr70, 131-133, Arg174, Tyr184, and Arg221 contribute to the ATP site; that span reads EDY. Residue Thr69 coordinates Mg(2+). The tract at residues 185–255 is small ATPAse domain (RuvB-S); sequence NVKDLCTIVT…VAQQALDMLD (71 aa). A head domain (RuvB-H) region spans residues 258-337; sequence QEGFDYLDRK…FNIITPDVPK (80 aa). Residues Arg294, Arg313, and Arg318 each contribute to the DNA site.

The protein belongs to the RuvB family. Homohexamer. Forms an RuvA(8)-RuvB(12)-Holliday junction (HJ) complex. HJ DNA is sandwiched between 2 RuvA tetramers; dsDNA enters through RuvA and exits via RuvB. An RuvB hexamer assembles on each DNA strand where it exits the tetramer. Each RuvB hexamer is contacted by two RuvA subunits (via domain III) on 2 adjacent RuvB subunits; this complex drives branch migration. In the full resolvosome a probable DNA-RuvA(4)-RuvB(12)-RuvC(2) complex forms which resolves the HJ.

The protein resides in the cytoplasm. It catalyses the reaction ATP + H2O = ADP + phosphate + H(+). In terms of biological role, the RuvA-RuvB-RuvC complex processes Holliday junction (HJ) DNA during genetic recombination and DNA repair, while the RuvA-RuvB complex plays an important role in the rescue of blocked DNA replication forks via replication fork reversal (RFR). RuvA specifically binds to HJ cruciform DNA, conferring on it an open structure. The RuvB hexamer acts as an ATP-dependent pump, pulling dsDNA into and through the RuvAB complex. RuvB forms 2 homohexamers on either side of HJ DNA bound by 1 or 2 RuvA tetramers; 4 subunits per hexamer contact DNA at a time. Coordinated motions by a converter formed by DNA-disengaged RuvB subunits stimulates ATP hydrolysis and nucleotide exchange. Immobilization of the converter enables RuvB to convert the ATP-contained energy into a lever motion, pulling 2 nucleotides of DNA out of the RuvA tetramer per ATP hydrolyzed, thus driving DNA branch migration. The RuvB motors rotate together with the DNA substrate, which together with the progressing nucleotide cycle form the mechanistic basis for DNA recombination by continuous HJ branch migration. Branch migration allows RuvC to scan DNA until it finds its consensus sequence, where it cleaves and resolves cruciform DNA. This is Holliday junction branch migration complex subunit RuvB from Shewanella denitrificans (strain OS217 / ATCC BAA-1090 / DSM 15013).